Consider the following 235-residue polypeptide: Large ribosomal subunit protein uL1 (235 aa).

It belongs to the universal ribosomal protein uL1 family. As to quaternary structure, part of the 50S ribosomal subunit.

In terms of biological role, binds directly to 23S rRNA. The L1 stalk is quite mobile in the ribosome, and is involved in E site tRNA release. Protein L1 is also a translational repressor protein, it controls the translation of the L11 operon by binding to its mRNA. The sequence is that of Large ribosomal subunit protein uL1 from Fusobacterium nucleatum subsp. nucleatum (strain ATCC 25586 / DSM 15643 / BCRC 10681 / CIP 101130 / JCM 8532 / KCTC 2640 / LMG 13131 / VPI 4355).